Here is a 472-residue protein sequence, read N- to C-terminus: Phenylalanine--tRNA ligase, mitochondrial (472 aa).

Substrate contacts are provided by residues 157–160 (SAHQ), R179, 186–188 (QHY), and 193–195 (QLE). An N6-acetyllysine modification is found at K202. 2 residues coordinate substrate: E287 and F312. The FDX-ACB domain occupies 379 to 471 (SKYPAVFNDI…AVQLLGVEGR (93 aa)).

Belongs to the class-II aminoacyl-tRNA synthetase family. In terms of assembly, monomer. In terms of tissue distribution, mainly expressed in the Purkinje cell of cerebellum.

It is found in the mitochondrion matrix. The protein resides in the mitochondrion. It carries out the reaction tRNA(Phe) + L-phenylalanine + ATP = L-phenylalanyl-tRNA(Phe) + AMP + diphosphate + H(+). Is responsible for the charging of tRNA(Phe) with phenylalanine in mitochondrial translation. To a lesser extent, also catalyzes direct attachment of m-Tyr (an oxidized version of Phe) to tRNA(Phe), thereby opening the way for delivery of the misacylated tRNA to the ribosome and incorporation of ROS-damaged amino acid into proteins. The protein is Phenylalanine--tRNA ligase, mitochondrial (Fars2) of Rattus norvegicus (Rat).